Here is a 178-residue protein sequence, read N- to C-terminus: MEHNSISCANLLRKLFSGSFFEDKIIDFLATTLDDQAGSSEIDFKLLLTISDDFFSVISEKNFLMIESEAHKIDSPFPLKCVRFPKLISELSDGGSMRAKNKKALGLFVKNSLSTFGLYTDKKWEKVLIETKTFDHKKRVSYDDTIKITWYTRNDLVYLIVLTLKYLLLNQKDIIRNN.

The protein belongs to the mimivirus L114/R131 family.

This is an uncharacterized protein from Acanthamoeba polyphaga mimivirus (APMV).